Consider the following 210-residue polypeptide: NEDD4 family-interacting protein 1-like (210 aa).

The disordered stretch occupies residues 1–31 (MAEPSGRYQQLPCEEEPEAGPQVAADAPPPY). Residues 1–105 (MAEPSGRYQQ…ADQLRIGNDG (105 aa)) are Cytoplasmic-facing. 2 short sequence motifs (PPxY motif) span residues 30-33 (PYSS) and 53-56 (PPSY). A helical transmembrane segment spans residues 106-126 (IFMLTFFMAFLFNWIGFFLSF). The Extracellular portion of the chain corresponds to 127–132 (CLTTSA). A helical transmembrane segment spans residues 133 to 153 (AGRYGAISGFGLSLIKWILIV). The Cytoplasmic segment spans residues 154 to 161 (RFSTYFPG). A helical transmembrane segment spans residues 162–182 (YFDGQYWLWWVFLVLGFLLFL). At 183–210 (RGFINYAKIRKMADSFSTLPRTRVLFIY) the chain is on the extracellular side.

The protein resides in the golgi apparatus membrane. May play a role in Golgi structure maintenance. The sequence is that of NEDD4 family-interacting protein 1-like (ndfip1l) from Danio rerio (Zebrafish).